The primary structure comprises 266 residues: MKIGKFVIEGNAAIMGILNVTPDSFSDGGSYTTVQKALDHVEQMIADGAKIIDVGGESTRPGCQFVSATDEIDRVVPVIKAIKENYDILISIDTYKTETARAALEAGADILNDVWAGLYDGQMFALAAEYDAPIILMHNQDEEVYQEVTQDVCDFLGNRAQAALDAGVPKNNIWIDPGFGFAKSVQQNTELLKRLDRVCQLGYPVLFGISRKRVVDALLGGNTKAKERDGATAALSAYALGKGCQIVRVHDVKANQDIVAVLSQLM.

Positions 12–260 (AAIMGILNVT…DVKANQDIVA (249 aa)) constitute a Pterin-binding domain. Asn19 contributes to the Mg(2+) binding site. (7,8-dihydropterin-6-yl)methyl diphosphate-binding positions include Thr59, Asp93, Asn112, Asp176, Lys212, and 248-250 (RVH).

Belongs to the DHPS family. In terms of assembly, homodimer or homotrimer. It depends on Mg(2+) as a cofactor.

It carries out the reaction (7,8-dihydropterin-6-yl)methyl diphosphate + 4-aminobenzoate = 7,8-dihydropteroate + diphosphate. It functions in the pathway cofactor biosynthesis; tetrahydrofolate biosynthesis; 7,8-dihydrofolate from 2-amino-4-hydroxy-6-hydroxymethyl-7,8-dihydropteridine diphosphate and 4-aminobenzoate: step 1/2. Its function is as follows. Catalyzes the condensation of para-aminobenzoate (pABA) with 6-hydroxymethyl-7,8-dihydropterin diphosphate (DHPt-PP) to form 7,8-dihydropteroate (H2Pte), the immediate precursor of folate derivatives. The sequence is that of Dihydropteroate synthase (folP) from Streptococcus pyogenes serotype M3 (strain ATCC BAA-595 / MGAS315).